A 168-amino-acid polypeptide reads, in one-letter code: Cell division inhibitor SulA (168 aa).

Residues 106 to 112 (ALLTGNY) form a ftsZ binding region. The lon protease binding stretch occupies residues 161–168 (KIHSSLYH).

The protein belongs to the SulA family. In terms of assembly, interacts with FtsZ. Post-translationally, is rapidly cleaved and degraded by the Lon protease once DNA damage is repaired.

Functionally, component of the SOS system and an inhibitor of cell division. Accumulation of SulA causes rapid cessation of cell division and the appearance of long, non-septate filaments. In the presence of GTP, binds a polymerization-competent form of FtsZ in a 1:1 ratio, thus inhibiting FtsZ polymerization and therefore preventing it from participating in the assembly of the Z ring. This mechanism prevents the premature segregation of damaged DNA to daughter cells during cell division. The protein is Cell division inhibitor SulA of Yersinia enterocolitica serotype O:8 / biotype 1B (strain NCTC 13174 / 8081).